Consider the following 861-residue polypeptide: DNA mismatch repair protein MutS (861 aa).

617 to 624 contacts ATP; that stretch reads GPNMGGKS. Positions 799–822 are disordered; sequence ETTSLPHEQPPAAKAKDAPQVPHQ. The span at 808–820 shows a compositional bias: low complexity; sequence PPAAKAKDAPQVP.

This sequence belongs to the DNA mismatch repair MutS family.

This protein is involved in the repair of mismatches in DNA. It is possible that it carries out the mismatch recognition step. This protein has a weak ATPase activity. The sequence is that of DNA mismatch repair protein MutS from Pseudomonas putida (strain GB-1).